Consider the following 72-residue polypeptide: Translation initiation factor IF-1 (72 aa).

An S1-like domain is found at 1–72 (MAKEDVIEIE…TRGRITYRFK (72 aa)).

It belongs to the IF-1 family. As to quaternary structure, component of the 30S ribosomal translation pre-initiation complex which assembles on the 30S ribosome in the order IF-2 and IF-3, IF-1 and N-formylmethionyl-tRNA(fMet); mRNA recruitment can occur at any time during PIC assembly.

The protein localises to the cytoplasm. Its function is as follows. One of the essential components for the initiation of protein synthesis. Stabilizes the binding of IF-2 and IF-3 on the 30S subunit to which N-formylmethionyl-tRNA(fMet) subsequently binds. Helps modulate mRNA selection, yielding the 30S pre-initiation complex (PIC). Upon addition of the 50S ribosomal subunit IF-1, IF-2 and IF-3 are released leaving the mature 70S translation initiation complex. The protein is Translation initiation factor IF-1 of Streptococcus mutans serotype c (strain ATCC 700610 / UA159).